Reading from the N-terminus, the 139-residue chain is Oocyte zinc finger protein XlCOF14 (139 aa).

5 C2H2-type zinc fingers span residues phenylalanine 6 to histidine 28, phenylalanine 33 to histidine 55, histidine 61 to histidine 83, phenylalanine 89 to histidine 111, and phenylalanine 117 to histidine 139.

It belongs to the krueppel C2H2-type zinc-finger protein family.

The protein resides in the nucleus. Its function is as follows. May be involved in transcriptional regulation. The protein is Oocyte zinc finger protein XlCOF14 of Xenopus laevis (African clawed frog).